We begin with the raw amino-acid sequence, 207 residues long: Holliday junction branch migration complex subunit RuvA (207 aa).

A domain I region spans residues 1 to 65; the sequence is MYDYIRGILT…ETEHVLYGFS (65 aa). Positions 66–144 are domain II; that stretch reads SRRERECFRM…DLLPLDSKAI (79 aa). A flexible linker region spans residues 145 to 155; it reads ASWESVKPSCM. Residues 155–207 form a domain III region; that stretch reads MDEGIQALAALGYSKPSAERMIAEAMSELPENASLAEILPIALKKNLQGLNKS.

The protein belongs to the RuvA family. In terms of assembly, homotetramer. Forms an RuvA(8)-RuvB(12)-Holliday junction (HJ) complex. HJ DNA is sandwiched between 2 RuvA tetramers; dsDNA enters through RuvA and exits via RuvB. An RuvB hexamer assembles on each DNA strand where it exits the tetramer. Each RuvB hexamer is contacted by two RuvA subunits (via domain III) on 2 adjacent RuvB subunits; this complex drives branch migration. In the full resolvosome a probable DNA-RuvA(4)-RuvB(12)-RuvC(2) complex forms which resolves the HJ.

It is found in the cytoplasm. In terms of biological role, the RuvA-RuvB-RuvC complex processes Holliday junction (HJ) DNA during genetic recombination and DNA repair, while the RuvA-RuvB complex plays an important role in the rescue of blocked DNA replication forks via replication fork reversal (RFR). RuvA specifically binds to HJ cruciform DNA, conferring on it an open structure. The RuvB hexamer acts as an ATP-dependent pump, pulling dsDNA into and through the RuvAB complex. HJ branch migration allows RuvC to scan DNA until it finds its consensus sequence, where it cleaves and resolves the cruciform DNA. This Chlamydia caviae (strain ATCC VR-813 / DSM 19441 / 03DC25 / GPIC) (Chlamydophila caviae) protein is Holliday junction branch migration complex subunit RuvA.